The primary structure comprises 329 residues: MARFSLVVVVTLSLAISMFPDTTTAQLKTNFYGNSCPNVEQIVKKVVQEKIKQTFVTIPATLRLFFHDCFVNGCDASVMIQSTPTNKAEKDHPDNISLAGDGFDVVIKAKKALDAIPSCKNKVSCADILALATRDVVVAAKGPSYAVELGRFDGLVSTAASVNGNLPGPNNKVTELNKLFAKNKLTQEDMIALSAAHTLGFAHCGKVFNRIYNFNLTHAVDPTLNKAYAKELQLACPKTVDPRIAINMDPTTPRQFDNIYFKNLQQGKGLFTSDQVLFTDGRSKPTVNDWAKNSVAFNKAFVTAMTKLGRVGVKTRRNGNIRRDCGAFN.

Residues 1–25 (MARFSLVVVVTLSLAISMFPDTTTA) form the signal peptide. Cystine bridges form between Cys-36–Cys-119, Cys-69–Cys-74, Cys-125–Cys-325, and Cys-204–Cys-236. His-67 serves as the catalytic Proton acceptor. Ca(2+) is bound by residues Asp-68, Val-71, Gly-73, Asp-75, and Ser-77. Pro-167 provides a ligand contact to substrate. His-197 contacts heme b. Thr-198 serves as a coordination point for Ca(2+). An N-linked (GlcNAc...) asparagine glycan is attached at Asn-215. Asp-249, Thr-252, and Asp-257 together coordinate Ca(2+).

This sequence belongs to the peroxidase family. Classical plant (class III) peroxidase subfamily. Heme b is required as a cofactor. Ca(2+) serves as cofactor. Expressed in the whole plant, with the highest expression in roots.

The protein resides in the secreted. The catalysed reaction is 2 a phenolic donor + H2O2 = 2 a phenolic radical donor + 2 H2O. Removal of H(2)O(2), oxidation of toxic reductants, biosynthesis and degradation of lignin, suberization, auxin catabolism, response to environmental stresses such as wounding, pathogen attack and oxidative stress. These functions might be dependent on each isozyme/isoform in each plant tissue. The chain is Peroxidase 73 (PER73) from Arabidopsis thaliana (Mouse-ear cress).